We begin with the raw amino-acid sequence, 287 residues long: MKLKTGLNLTALLLFMISVAFPAQADTQKMYGIRGDNLSIATQMPAPRTYSVKGQTYTTKSGNEAKSYIKEGLASYYHLKFDGRKTASGDVYNSKQFTAAHKTLPINSYALVTNLHNNRKVIVRINDRGPFSDKRLIDLSHAAAKEIGLISRGIGQVRIEALHVAKNGNLSGAATKTLAKQAKTQEAADRLVLKSNTLFDNTSKSINALKGTEFYCLKMLELTSRSQANKLITQLALANIQTEVNRSGNKYEIYIGPFDDKTKMAQVRTKLQKMANNKPLIVYTYKN.

A signal peptide spans 1-25; it reads MKLKTGLNLTALLLFMISVAFPAQA. One can recognise an SPOR domain in the interval 209 to 284; the sequence is LKGTEFYCLK…ANNKPLIVYT (76 aa).

It belongs to the RlpA family.

Lytic transglycosylase with a strong preference for naked glycan strands that lack stem peptides. The polypeptide is Endolytic peptidoglycan transglycosylase RlpA (Haemophilus influenzae (strain ATCC 51907 / DSM 11121 / KW20 / Rd)).